We begin with the raw amino-acid sequence, 117 residues long: Holo-[acyl-carrier-protein] synthase (117 aa).

Residues aspartate 8 and glutamate 58 each contribute to the Mg(2+) site.

The protein belongs to the P-Pant transferase superfamily. AcpS family. Mg(2+) serves as cofactor.

It is found in the cytoplasm. It catalyses the reaction apo-[ACP] + CoA = holo-[ACP] + adenosine 3',5'-bisphosphate + H(+). Functionally, transfers the 4'-phosphopantetheine moiety from coenzyme A to a Ser of acyl-carrier-protein. The polypeptide is Holo-[acyl-carrier-protein] synthase (Latilactobacillus sakei subsp. sakei (strain 23K) (Lactobacillus sakei subsp. sakei)).